Here is a 331-residue protein sequence, read N- to C-terminus: DNA-directed RNA polymerase subunit alpha (331 aa).

An alpha N-terminal domain (alpha-NTD) region spans residues 1–230 (MKNIKTSPYI…KQMSVFNSEW (230 aa)). An alpha C-terminal domain (alpha-CTD) region spans residues 247-331 (LKPLLQKIEA…ALQKRLNKLK (85 aa)).

This sequence belongs to the RNA polymerase alpha chain family. As to quaternary structure, homodimer. The RNAP catalytic core consists of 2 alpha, 1 beta/beta' and 1 omega subunit. When a sigma factor is associated with the core the holoenzyme is formed, which can initiate transcription.

It catalyses the reaction RNA(n) + a ribonucleoside 5'-triphosphate = RNA(n+1) + diphosphate. DNA-dependent RNA polymerase catalyzes the transcription of DNA into RNA using the four ribonucleoside triphosphates as substrates. This Wolinella succinogenes (strain ATCC 29543 / DSM 1740 / CCUG 13145 / JCM 31913 / LMG 7466 / NCTC 11488 / FDC 602W) (Vibrio succinogenes) protein is DNA-directed RNA polymerase subunit alpha.